A 290-amino-acid chain; its full sequence is UPF0761 membrane protein YihY (290 aa).

A run of 6 helical transmembrane segments spans residues 44–64 (LLSL…FPMF), 104–124 (VGAC…DSAL), 140–160 (FAVY…SLAI), 183–203 (ILPL…VPTT), 210–230 (ALVG…GFAL), and 244–264 (VLAV…IVLL).

This sequence belongs to the UPF0761 family.

It localises to the cell inner membrane. The chain is UPF0761 membrane protein YihY from Salmonella paratyphi B (strain ATCC BAA-1250 / SPB7).